Here is a 314-residue protein sequence, read N- to C-terminus: tRNA dimethylallyltransferase (314 aa).

12 to 19 (GPTGTGKS) serves as a coordination point for ATP. 14–19 (TGTGKS) contacts substrate.

This sequence belongs to the IPP transferase family. Monomer. Mg(2+) serves as cofactor.

The enzyme catalyses adenosine(37) in tRNA + dimethylallyl diphosphate = N(6)-dimethylallyladenosine(37) in tRNA + diphosphate. Catalyzes the transfer of a dimethylallyl group onto the adenine at position 37 in tRNAs that read codons beginning with uridine, leading to the formation of N6-(dimethylallyl)adenosine (i(6)A). The chain is tRNA dimethylallyltransferase from Mycolicibacterium paratuberculosis (strain ATCC BAA-968 / K-10) (Mycobacterium paratuberculosis).